The sequence spans 328 residues: Gonadotropin-releasing hormone receptor (328 aa).

The Extracellular portion of the chain corresponds to 1–38 (MANSDSPEQNENHCSSINSSIPLTPGSLPTLTLSGKIR). Residue N18 is glycosylated (N-linked (GlcNAc...) asparagine). The helical transmembrane segment at 39-58 (VTVTFFLFLLSTIFNTSFLL) threads the bilayer. The Cytoplasmic segment spans residues 59 to 77 (KLQNWTQRKEKRKKLSRMK). The chain crosses the membrane as a helical span at residues 78 to 97 (LLLKHLTLANLLETLIVMPL). Residues 98–115 (DGMWNITVQWYAGELLCK) lie on the Extracellular side of the membrane. N-linked (GlcNAc...) asparagine glycosylation is present at N102. Residues C114 and C196 are joined by a disulfide bond. A helical membrane pass occupies residues 116 to 137 (VLSYLKLFSMYAPAFMMVVISL). Residues 138-164 (DRSLAITKPLAVKSNSKLGQFMIGLAW) are Cytoplasmic-facing. Residues 165–184 (LLSSIFAGPQLYIFGMIHLA) traverse the membrane as a helical segment. The Extracellular segment spans residues 185–212 (DDSGQTEGFSQCVTHCSFPQWWHQAFYN). A helical transmembrane segment spans residues 213-232 (FFTFSCLFIIPLLIMVICNA). Residues 233–281 (KIIFTLTRVLHQDPHKLQLNQSKNNIPRARLRTLKMTVAFATSFTVCWT) lie on the Cytoplasmic side of the membrane. A helical membrane pass occupies residues 282 to 300 (PYYVLGIWYWFDPDMVNRV). Residues 301-306 (SDPVNH) are Extracellular-facing. Residues 307 to 326 (FFFLFAFLNPCFNPLIYGYF) form a helical membrane-spanning segment. At 327-328 (SL) the chain is on the cytoplasmic side.

It belongs to the G-protein coupled receptor 1 family.

It localises to the cell membrane. In terms of biological role, receptor for gonadotropin releasing hormone (GnRH) that mediates the action of GnRH to stimulate the secretion of the gonadotropic hormones luteinizing hormone (LH) and follicle-stimulating hormone (FSH). This receptor mediates its action by association with G-proteins that activate a phosphatidylinositol-calcium second messenger system. The sequence is that of Gonadotropin-releasing hormone receptor (GNRHR) from Bos mutus grunniens (Wild yak).